A 254-amino-acid chain; its full sequence is tRNA uridine(34) hydroxylase (254 aa).

Positions 123-217 constitute a Rhodanese domain; it reads QDPNVILLDT…YLESIPESES (95 aa). Cys-177 acts as the Cysteine persulfide intermediate in catalysis.

Belongs to the TrhO family.

The catalysed reaction is uridine(34) in tRNA + AH2 + O2 = 5-hydroxyuridine(34) in tRNA + A + H2O. Its function is as follows. Catalyzes oxygen-dependent 5-hydroxyuridine (ho5U) modification at position 34 in tRNAs. The polypeptide is tRNA uridine(34) hydroxylase (Legionella pneumophila (strain Paris)).